Reading from the N-terminus, the 364-residue chain is DNA replication and repair protein RecF (364 aa).

Residue 30 to 37 coordinates ATP; sequence GNNGQGKT.

The protein belongs to the RecF family.

It localises to the cytoplasm. In terms of biological role, the RecF protein is involved in DNA metabolism; it is required for DNA replication and normal SOS inducibility. RecF binds preferentially to single-stranded, linear DNA. It also seems to bind ATP. The polypeptide is DNA replication and repair protein RecF (Geobacter sp. (strain M21)).